Reading from the N-terminus, the 310-residue chain is Malate dehydrogenase (310 aa).

NAD(+)-binding positions include 7-12 and Asp32; that span reads GAGNVG. Substrate-binding residues include Arg81 and Arg87. NAD(+)-binding positions include Asn94 and 117–119; that span reads VSN. Residues Asn119 and Arg150 each contribute to the substrate site. His174 (proton acceptor) is an active-site residue.

It belongs to the LDH/MDH superfamily. MDH type 3 family.

It carries out the reaction (S)-malate + NAD(+) = oxaloacetate + NADH + H(+). Functionally, catalyzes the reversible oxidation of malate to oxaloacetate. The protein is Malate dehydrogenase of Pelodictyon phaeoclathratiforme (strain DSM 5477 / BU-1).